The primary structure comprises 329 residues: Olfactory receptor 5AL1 (329 aa).

The Extracellular segment spans residues M1 to F44. N21 carries N-linked (GlcNAc...) asparagine glycosylation. The chain crosses the membrane as a helical span at residues G45 to I65. Residues Q66–T73 lie on the Cytoplasmic side of the membrane. Residues P74–A94 form a helical membrane-spanning segment. Over P95–C113 the chain is Extracellular. Residues C113 and C205 are joined by a disulfide bond. A helical membrane pass occupies residues A114–M134. Topologically, residues A135 to C157 are cytoplasmic. Residues I158–A178 form a helical membrane-spanning segment. Over T179–G220 the chain is Extracellular. A helical transmembrane segment spans residues F221–I241. Residues L242–A253 lie on the Cytoplasmic side of the membrane. Residues F254–M274 traverse the membrane as a helical segment. The Extracellular segment spans residues Y275 to D287. Residues K288–L308 form a helical membrane-spanning segment. The Cytoplasmic portion of the chain corresponds to R309–K329.

This sequence belongs to the G-protein coupled receptor 1 family.

Its subcellular location is the cell membrane. Functionally, odorant receptor. This chain is Olfactory receptor 5AL1 (OR5AL1), found in Homo sapiens (Human).